Here is a 589-residue protein sequence, read N- to C-terminus: Multidrug transporter FLR2 (589 aa).

Residues 50 to 116 (KEEMKQDNQT…SSTKDASKPE (67 aa)) are disordered. The segment covering 56 to 73 (DNQTSTDSMSTSTQQETD) has biased composition (low complexity). N-linked (GlcNAc...) asparagine glycosylation is present at Asn-57. Basic and acidic residues predominate over residues 107–116 (SSTKDASKPE). The N-linked (GlcNAc...) asparagine glycan is linked to Asn-136. Transmembrane regions (helical) follow at residues 143–163 (TFVIVQLMVLTCINYMGSSIY), 179–199 (VVGTLNLSMYVLGYAIGPIIF), 211–231 (MPLYLWTFILFTILQVACALV), 234–254 (IAGLVILRFITGILCSPVLAT), 275–295 (WAVGAVAAPVMAPILGAAMVV), 301–321 (WIFWLMLFMCGATLLSIIFFF), 378–398 (PIILAFDVYIALCYGAFYLFF), 417–437 (GLAFLGFCVGCVFAYTALIIF), 455–475 (LFLILAMCLGWCLPFSLFFFG), 480–500 (IHWILPIIAELFFVLSVFNLF), 516–536 (ASVFAGNGLCRGAFAAAFPLF), and 551–571 (VAWGSTLIGFITVVLSLIPFV).

The protein belongs to the major facilitator superfamily.

Its subcellular location is the cell membrane. In terms of biological role, multidrug transporter that confers resistance to 5-flucytosine (5-FC) and clotrimazole. Further confers azole drug resistance. Plays direct roles in extrusion of 5-flucytosine and clotrimazole. This is Multidrug transporter FLR2 from Candida glabrata (strain ATCC 2001 / BCRC 20586 / JCM 3761 / NBRC 0622 / NRRL Y-65 / CBS 138) (Yeast).